The following is a 216-amino-acid chain: MGESKQEHLIVGVSPFNPRFTPEWLSSAFQWGAERFNTVDVLHPGEISMSLLTSTGTPLGRAKRKVRQQCNRDMRNVEHALEISGIKLGRGKPVLISDYLQTQSYQCRRRSVIAEFQNNQIFQDACRAMSRAACQSRLRVTNVNIEPDIETAVKYIFDELPAYTHCSDLFEYETAALGYPTEWPIGKLIESGLTSLERDPNSSFIVIDFEKELIDD.

The Nucleophile role is filled by S14. Substrate is bound by residues N17, 155–159 (YIFDE), and Y179.

Belongs to the CDPS family.

The enzyme catalyses 2 L-leucyl-tRNA(Leu) = cyclo(L-leucyl-L-leucyl) + 2 tRNA(Leu) + 2 H(+). In terms of biological role, it uses activated amino acids in the form of aminoacyl-tRNAs (aa-tRNAs) as substrates to catalyze the ATP-independent formation of cyclodipeptides which are intermediates in diketopiperazine (DKP) biosynthetic pathways. Catalyzes the formation of cyclo(L-Leu-L-Leu) (cLL) from L-leucyl-tRNA(Leu). Can incorporate various nonpolar residues, such as L-leucine and L-methionine, into cyclodipeptides. The chain is Cyclo(L-leucyl-L-leucyl) synthase from Corynebacterium jeikeium (strain K411).